Here is a 199-residue protein sequence, read N- to C-terminus: OPA3-like protein (199 aa).

Residues 98–141 are a coiled coil; it reads RSSEKDKKKEEALQNRFKNLEEKLEVQQETINNLTNVIEAIQSS.

It belongs to the OPA3 family.

The protein is OPA3-like protein of Dictyostelium discoideum (Social amoeba).